The primary structure comprises 71 residues: Brevinin-1SN2 (71 aa).

An N-terminal signal peptide occupies residues 1–22 (MFTMKKSLLLIFFLGTINLSLC). The propeptide at 23 to 45 (EEERNADEDEKRDGDDESDVEVQ) is removed in mature form. An intrachain disulfide couples Cys-65 to Cys-71.

It belongs to the frog skin active peptide (FSAP) family. Brevinin subfamily. In terms of tissue distribution, expressed by the skin glands.

Its subcellular location is the secreted. Functionally, antimicrobial peptide. Active against a variety of Gram-negative and Gram-positive bacterial strains. Active against fungus C.glabrata 090902 and C.albicans ATCC 10231. Shows hemolytic activity against human erythrocytes. The sequence is that of Brevinin-1SN2 from Sylvirana spinulosa (Fine-spined frog).